We begin with the raw amino-acid sequence, 380 residues long: MGIHGLAKLIADQAPSAIKEQDIKNYFGRKIAIDASMCMYQFLVAVRQDGNVLQNENGETTSHLMGMFYRTIRMLEHGIKPVYVFDGKPPQLKSGELEKRGERRAEAEKLLAQAQEAGEQENIDKFSKRLVKVTQQHNDECKKLLTLMGVPYIEAPCEAEASCAALVKAGKVFATATEDMDGLTFGTGVLLRHLTASEAKKLPIQEFQFTRLLQDINLTHEQFIDLCILLGCDYCGTIKGIGPKRAIDLIRQHGSIEEILENIDSSKHPAPEDWLYKEARGLFLQPDVVDCSTVDLKWSEPDEDALIQFMCAEKQFSEDRIKNGCKKILKSRQGSTQGRLDTFFTITGSLSSKRKEPETKGSNKKKQKTGATPGKFKKGK.

The N-domain stretch occupies residues 1-104 (MGIHGLAKLI…GELEKRGERR (104 aa)). Asp-34 is a Mg(2+) binding site. Positions 47 and 70 each coordinate DNA. Mg(2+) contacts are provided by Asp-86, Glu-158, Glu-160, Asp-179, and Asp-181. The I-domain stretch occupies residues 122–253 (NIDKFSKRLV…KRAIDLIRQH (132 aa)). A DNA-binding site is contributed by Glu-158. Residues Gly-231 and Asp-233 each coordinate DNA. Asp-233 lines the Mg(2+) pocket. The interaction with PCNA stretch occupies residues 336 to 344 (TQGRLDTFF). The disordered stretch occupies residues 348-380 (GSLSSKRKEPETKGSNKKKQKTGATPGKFKKGK).

Belongs to the XPG/RAD2 endonuclease family. FEN1 subfamily. In terms of assembly, interacts with PCNA. Three molecules of fen1 bind to one PCNA trimer with each molecule binding to one PCNA monomer. PCNA stimulates the nuclease activity without altering cleavage specificity. Mg(2+) is required as a cofactor. In terms of processing, phosphorylated. Phosphorylation upon DNA damage induces relocalization to the nuclear plasma.

Its subcellular location is the nucleus. It localises to the nucleolus. The protein resides in the nucleoplasm. The protein localises to the mitochondrion. Structure-specific nuclease with 5'-flap endonuclease and 5'-3' exonuclease activities involved in DNA replication and repair. During DNA replication, cleaves the 5'-overhanging flap structure that is generated by displacement synthesis when DNA polymerase encounters the 5'-end of a downstream Okazaki fragment. It enters the flap from the 5'-end and then tracks to cleave the flap base, leaving a nick for ligation. Also involved in the long patch base excision repair (LP-BER) pathway, by cleaving within the apurinic/apyrimidinic (AP) site-terminated flap. Acts as a genome stabilization factor that prevents flaps from equilibrating into structures that lead to duplications and deletions. Also possesses 5'-3' exonuclease activity on nicked or gapped double-stranded DNA, and exhibits RNase H activity. Also involved in replication and repair of rDNA and in repairing mitochondrial DNA. The chain is Flap endonuclease 1 (fen1) from Salmo salar (Atlantic salmon).